A 504-amino-acid polypeptide reads, in one-letter code: Lysine--tRNA ligase (504 aa).

2 residues coordinate Mg(2+): E411 and E418.

Belongs to the class-II aminoacyl-tRNA synthetase family. In terms of assembly, homodimer. Mg(2+) serves as cofactor.

Its subcellular location is the cytoplasm. The catalysed reaction is tRNA(Lys) + L-lysine + ATP = L-lysyl-tRNA(Lys) + AMP + diphosphate. The protein is Lysine--tRNA ligase of Clostridium botulinum (strain Okra / Type B1).